Here is a 454-residue protein sequence, read N- to C-terminus: tRNA-2-methylthio-N(6)-dimethylallyladenosine synthase (454 aa).

Residues 6 to 122 (RHYHITTFGC…LKDLLESVFD (117 aa)) enclose the MTTase N-terminal domain. [4Fe-4S] cluster is bound by residues cysteine 15, cysteine 51, cysteine 85, cysteine 157, cysteine 161, and cysteine 164. In terms of domain architecture, Radical SAM core spans 143 to 381 (RDSKVTAWVN…HLGNLKVAER (239 aa)). Residues 383 to 447 (QRYFGRIEEV…PFSLTGQPVE (65 aa)) enclose the TRAM domain.

The protein belongs to the methylthiotransferase family. MiaB subfamily. As to quaternary structure, monomer. [4Fe-4S] cluster is required as a cofactor.

The protein localises to the cytoplasm. The enzyme catalyses N(6)-dimethylallyladenosine(37) in tRNA + (sulfur carrier)-SH + AH2 + 2 S-adenosyl-L-methionine = 2-methylsulfanyl-N(6)-dimethylallyladenosine(37) in tRNA + (sulfur carrier)-H + 5'-deoxyadenosine + L-methionine + A + S-adenosyl-L-homocysteine + 2 H(+). Its function is as follows. Catalyzes the methylthiolation of N6-(dimethylallyl)adenosine (i(6)A), leading to the formation of 2-methylthio-N6-(dimethylallyl)adenosine (ms(2)i(6)A) at position 37 in tRNAs that read codons beginning with uridine. This Nostoc punctiforme (strain ATCC 29133 / PCC 73102) protein is tRNA-2-methylthio-N(6)-dimethylallyladenosine synthase.